Reading from the N-terminus, the 164-residue chain is Kunitz-type serine protease inhibitor BbKI (164 aa).

This sequence belongs to the protease inhibitor I3 (leguminous Kunitz-type inhibitor) family. As to quaternary structure, monomer.

It localises to the secreted. Functionally, inhibits bovine trypsin, human plasma kallikrein and plasmin and weakly bovine chymotrypsin. In Bauhinia bauhinioides (Perlebia bauhinoides), this protein is Kunitz-type serine protease inhibitor BbKI.